The chain runs to 341 residues: tRNA N6-adenosine threonylcarbamoyltransferase (341 aa).

2 residues coordinate Fe cation: histidine 115 and histidine 119. Substrate-binding positions include 137–141 (IVSGG), aspartate 170, glycine 183, aspartate 187, and asparagine 276. Aspartate 304 is a binding site for Fe cation.

Belongs to the KAE1 / TsaD family. It depends on Fe(2+) as a cofactor.

Its subcellular location is the cytoplasm. It carries out the reaction L-threonylcarbamoyladenylate + adenosine(37) in tRNA = N(6)-L-threonylcarbamoyladenosine(37) in tRNA + AMP + H(+). Required for the formation of a threonylcarbamoyl group on adenosine at position 37 (t(6)A37) in tRNAs that read codons beginning with adenine. Is involved in the transfer of the threonylcarbamoyl moiety of threonylcarbamoyl-AMP (TC-AMP) to the N6 group of A37, together with TsaE and TsaB. TsaD likely plays a direct catalytic role in this reaction. The protein is tRNA N6-adenosine threonylcarbamoyltransferase of Staphylococcus aureus (strain USA300).